We begin with the raw amino-acid sequence, 226 residues long: MKFFIDTASLEEIQAAKDLGMLDGVTTNPSLIARIVGDASSFSYQDFREHIRRIAEIADGPVSAEVTTTDAEEMIHEGEALAAIHENVVVKCPLTIDGLKAIRHLSEKGIRTNATLVFSPNQALLAAKAGASYVSPFVGRLDDISTEGMALVEQIITIYDNYGYLTEVIVASIRHPRHVVESAMMGADIATIPFSVIRQLANHPLTDAGLKKFMEDAAILKKESDA.

Lys-91 acts as the Schiff-base intermediate with substrate in catalysis.

This sequence belongs to the transaldolase family. Type 3B subfamily.

It localises to the cytoplasm. The enzyme catalyses D-sedoheptulose 7-phosphate + D-glyceraldehyde 3-phosphate = D-erythrose 4-phosphate + beta-D-fructose 6-phosphate. The protein operates within carbohydrate degradation; pentose phosphate pathway; D-glyceraldehyde 3-phosphate and beta-D-fructose 6-phosphate from D-ribose 5-phosphate and D-xylulose 5-phosphate (non-oxidative stage): step 2/3. Its function is as follows. Transaldolase is important for the balance of metabolites in the pentose-phosphate pathway. The chain is Probable transaldolase from Chlorobium phaeobacteroides (strain DSM 266 / SMG 266 / 2430).